We begin with the raw amino-acid sequence, 178 residues long: Large ribosomal subunit protein uL6c (178 aa).

The protein belongs to the universal ribosomal protein uL6 family. Part of the 50S ribosomal subunit.

It localises to the plastid. It is found in the chloroplast. Its function is as follows. Binds 23S rRNA. This is Large ribosomal subunit protein uL6c (rpl6) from Phaeodactylum tricornutum (strain CCAP 1055/1).